The following is a 580-amino-acid chain: UPF0329 protein ECU06_0080 (580 aa).

The span at 308-330 (RQKRREREMEKSMKELLRDEEKA) shows a compositional bias: basic and acidic residues. Residues 308 to 384 (RQKRREREME…KTGKKSKGGR (77 aa)) are disordered. Basic residues predominate over residues 331–340 (KSKKGRKKKS). Acidic residues predominate over residues 351–363 (SETEEVEASEEME). A compositionally biased stretch (basic residues) spans 372–384 (ARRKTGKKSKGGR).

This sequence belongs to the UPF0329 family.

The protein is UPF0329 protein ECU06_0080 of Encephalitozoon cuniculi (strain GB-M1) (Microsporidian parasite).